A 142-amino-acid chain; its full sequence is Large ribosomal subunit protein uL13 (142 aa).

It belongs to the universal ribosomal protein uL13 family. In terms of assembly, part of the 50S ribosomal subunit.

This protein is one of the early assembly proteins of the 50S ribosomal subunit, although it is not seen to bind rRNA by itself. It is important during the early stages of 50S assembly. This Desulfotalea psychrophila (strain LSv54 / DSM 12343) protein is Large ribosomal subunit protein uL13.